The sequence spans 102 residues: Small ribosomal subunit protein uS10 (102 aa).

Belongs to the universal ribosomal protein uS10 family. As to quaternary structure, part of the 30S ribosomal subunit.

In terms of biological role, involved in the binding of tRNA to the ribosomes. In Planobispora rosea, this protein is Small ribosomal subunit protein uS10.